We begin with the raw amino-acid sequence, 75 residues long: Antimicrobial peptide ctriporin (75 aa).

Positions 1 to 22 are cleaved as a signal peptide; it reads MDSKYLFVFLIFNVIVIDLCQG. At Lys-41 the chain carries Lysine amide. Positions 47-75 are excised as a propeptide; the sequence is ELGSQYDYLQDFRKRELDLDDLLSKFPDY.

The protein belongs to the non-disulfide-bridged peptide (NDBP) superfamily. Short antimicrobial peptide (group 4) family. As to expression, expressed by the venom gland.

The protein localises to the secreted. Its subcellular location is the target cell membrane. Functionally, antimicrobial peptide that acts by breaking the cell wall. Is active against Gram-positive bacteria, fungi and antibiotic-resistant pathogens: S.aureus (MIC=5 ug/ml), M.luteus (MIC=5 ug/ml), B.thuringiensis (MIC=10 ug/ml), B.subtilis (MIC=10 ug/ml), C.albicans (MIC=20 ug/ml), methicillin-resistant S.aureus (MIC=5-10 ug/ml), and penicillin-resistant S.epidermidis (MIC=10 ug/ml). Also shows potent activity against antibiotic-sensitive and -resistant Acinetobacter baumannii (MIC=10-20 uM). Shows cytolytic activity against human erythrocytes. In vivo, is efficient in curing staphylococcal skin infection in mice, when externally applied. This is Antimicrobial peptide ctriporin from Chaerilus tricostatus (Scorpion).